A 959-amino-acid polypeptide reads, in one-letter code: E3 ubiquitin-protein ligase arkadia-B (959 aa).

A compositionally biased stretch (polar residues) spans 51 to 66; sequence CSDTNKQQSDLNSNGT. Disordered regions lie at residues 51–171, 189–212, and 225–271; these read CSDT…VSSL, RKRF…MLQR, and LLPS…SGGM. The span at 112–131 shows a compositional bias: low complexity; the sequence is SSFSDCISSPSSSSHFGDSD. Residues 142–156 are compositionally biased toward polar residues; sequence PLSSVNSTPRTQSAR. Residues 228 to 246 are compositionally biased toward low complexity; sequence SSSSSSENDLSSESSSSSS. Positions 256-267 are enriched in polar residues; it reads TGENRQDGTTLP. The SUMO interaction motif 1 (SIM) motif lies at 275–279; that stretch reads VVVIE. An SUMO interaction motif 2 (SIM) motif is present at residues 300 to 306; sequence EVEIVTV. The disordered stretch occupies residues 318 to 341; that stretch reads HPRSHWGQNSQSGRTQEQRTRNRV. The span at 323–332 shows a compositional bias: polar residues; that stretch reads WGQNSQSGRT. Residues 355–359 carry the SUMO interaction motif 3 (SIM) motif; it reads VVDLT. The span at 370–397 shows a compositional bias: polar residues; that stretch reads TTSGRVESQPVSIVSSLTSTSEPASDSM. Disordered stretches follow at residues 370–399, 475–499, 615–649, and 661–680; these read TTSG…SMSG, HFPH…SFRD, PRPL…MDYV, and PSLT…HLSA. Basic residues predominate over residues 475-487; the sequence is HFPHHHHHHHHSS. Over residues 620–632 the composition is skewed to polar residues; that stretch reads HQTSSCPHSNSAS. Over residues 633 to 646 the composition is skewed to pro residues; the sequence is QPPPPPPPPPPPPM. Residues 872 to 874 form a ubiquitin binding region; sequence YPH. The Zn(2+) site is built by C907 and C910. The RING-type; atypical zinc finger occupies 907–948; it reads CTICLSILEEGEDVRRLPCMHLFHQVCVDQWLITNKKCPICR. The ubiquitin binding stretch occupies residues 922–926; sequence RLPCM. Residues H930 and C933 each coordinate Zn(2+).

The protein belongs to the Arkadia family. As to quaternary structure, monomer.

It localises to the nucleus. Its subcellular location is the cytoplasm. The protein resides in the PML body. The enzyme catalyses S-ubiquitinyl-[E2 ubiquitin-conjugating enzyme]-L-cysteine + [acceptor protein]-L-lysine = [E2 ubiquitin-conjugating enzyme]-L-cysteine + N(6)-ubiquitinyl-[acceptor protein]-L-lysine.. Its pathway is protein modification; protein ubiquitination. With respect to regulation, binds free ubiquitin non-covalently via its RING-type zinc finger. Ubiquitin-binding leads to enhance the E3 ubiquitin-protein ligase activity by stabilizing the ubiquitin-conjugating enzyme E2 (donor ubiquitin) in the 'closed' conformation and activating ubiquitin transfer. E3 ubiquitin-protein ligase required for mesoderm patterning during embryonic development. Acts as an enhancer of the transcriptional responses of the smad2/smad3 effectors, which are activated downstream of BMP. Acts by mediating ubiquitination and degradation of SMAD inhibitors such as smad7, inducing their proteasomal degradation and thereby enhancing the transcriptional activity of TGF-beta and BMP. Specifically binds polysumoylated chains via SUMO interaction motifs (SIMs) and mediates ubiquitination of sumoylated substrates. The regulation of the BMP-SMAD signaling is however independent of sumoylation and is not dependent of SUMO interaction motifs (SIMs). The sequence is that of E3 ubiquitin-protein ligase arkadia-B (rnf111-b) from Xenopus laevis (African clawed frog).